The sequence spans 179 residues: Large ribosomal subunit protein uL5 (179 aa).

The protein belongs to the universal ribosomal protein uL5 family. As to quaternary structure, part of the 50S ribosomal subunit; part of the 5S rRNA/L5/L18/L25 subcomplex. Contacts the 5S rRNA and the P site tRNA. Forms a bridge to the 30S subunit in the 70S ribosome.

This is one of the proteins that bind and probably mediate the attachment of the 5S RNA into the large ribosomal subunit, where it forms part of the central protuberance. In the 70S ribosome it contacts protein S13 of the 30S subunit (bridge B1b), connecting the 2 subunits; this bridge is implicated in subunit movement. Contacts the P site tRNA; the 5S rRNA and some of its associated proteins might help stabilize positioning of ribosome-bound tRNAs. The polypeptide is Large ribosomal subunit protein uL5 (Geotalea daltonii (strain DSM 22248 / JCM 15807 / FRC-32) (Geobacter daltonii)).